The sequence spans 1138 residues: uncharacterized protein (1138 aa).

2 disordered regions span residues 985–1015 (EKKL…MAQE) and 1094–1138 (LVAT…QNKL). Acidic residues predominate over residues 1110 to 1138 (DDDEYEKYDSGIEDIETDVDEEEEVQNKL).

This is an uncharacterized protein from Ostreid herpesvirus 1 (isolate France) (OsHV-1).